The sequence spans 654 residues: Amyloid beta precursor like protein 1 (654 aa).

The N-terminal stretch at 1-38 (MGPTSPAARGQGRRWRPPPLPLLLPLSLLLLRAQLAVG) is a signal peptide. At 39-584 (NLAVGSPSAA…APSGTGVSRE (546 aa)) the chain is on the extracellular side. Positions 50–146 (APGSAQVAGL…PFHCLPGEFV (97 aa)) are GFLD subdomain. One can recognise an E1 domain in the interval 50–212 (APGSAQVAGL…RGVEYVCCPP (163 aa)). Disulfide bonds link cysteine 60–cysteine 84, cysteine 95–cysteine 140, cysteine 120–cysteine 128, cysteine 156–cysteine 210, cysteine 167–cysteine 197, and cysteine 181–cysteine 209. The cuBD subdomain stretch occupies residues 154–212 (EGCRFLHQERMDQCESSTRRHQEAQEACSSQGLILHGSGMLLPCGSDRFRGVEYVCCPP). Histidine 174 contributes to the Cu(2+) binding site. 3 residues coordinate Zn(2+): glutamate 206, cysteine 209, and cysteine 210. Positions 214 to 297 (ATPNPSGMAA…VTPTPRPTDG (84 aa)) are disordered. The segment covering 262–272 (QAEEEEEEEEE) has biased composition (acidic residues). Residues 297–488 (GVDVYFGMPG…QELRPQIQEL (192 aa)) form the E2 domain. 2 heparin-binding regions span residues 314 to 346 (FLRA…SKNL) and 414 to 445 (LMAL…DPEK). A collagen-binding region spans residues 446–463 (AQQMRFQVQTHLQVIEER). Asparagine 465 carries N-linked (GlcNAc...) asparagine glycosylation. The disordered stretch occupies residues 497-580 (SELDASVPGS…RDELAPSGTG (84 aa)). Basic and acidic residues predominate over residues 508-523 (SEDKGSLQPPESKDDP). A compositionally biased stretch (polar residues) spans 529-539 (KGSTDQESSSS). The N-linked (GlcNAc...) asparagine glycan is linked to asparagine 555. Position 565 (histidine 565) interacts with Cu(2+). Histidine 565 contacts Zn(2+). Residues 585-607 (ALSGLLIMGAGGGSLIVLSLLLL) form a helical membrane-spanning segment. The Basolateral sorting signal signature appears at 608–619 (RKKKPYGTISHG). The Cytoplasmic segment spans residues 608–654 (RKKKPYGTISHGVVEVDPMLTLEEQQLRELQRHGYENPTYRFLEERP). The interval 636–652 (ELQRHGYENPTYRFLEE) is interaction with DAB1. The tract at residues 640–654 (HGYENPTYRFLEERP) is interaction with DAB2. Positions 644–647 (NPTY) match the NPXY motif; contains endocytosis signal motif.

This sequence belongs to the APP family. In terms of assembly, monomer and homodimer. Heparin binding promotes homodimerization. Binds, via its C-terminus, to the PID domain of several cytoplasmic proteins, including APBB and APBA family members, MAPK8IP1 and DAB1. Binding to Dab1 inhibits its serine phosphorylation. Interacts with CPEB1. Interacts (via NPXY motif) with DAB2 (via PID domain); the interaction is impaired by tyrosine phosphorylation of the NPXY motif. Interacts (via NPXY motif) with DAB1. In terms of processing, proteolytically cleaved by caspases during neuronal apoptosis. Cleaved, in vitro, at Asp-624 by caspase-3. Post-translationally, N- and O-glycosylated.

It is found in the cell membrane. It localises to the cytoplasm. Its function is as follows. May play a role in postsynaptic function. The C-terminal gamma-secretase processed fragment, ALID1, activates transcription activation through APBB1 (Fe65) binding. Couples to JIP signal transduction through C-terminal binding. May interact with cellular G-protein signaling pathways. Can regulate neurite outgrowth through binding to components of the extracellular matrix such as heparin and collagen I. In terms of biological role, the gamma-CTF peptide, C30, is a potent enhancer of neuronal apoptosis. The polypeptide is Amyloid beta precursor like protein 1 (Aplp1) (Mus musculus (Mouse)).